The sequence spans 126 residues: Protein ApaG (126 aa).

Positions 2 to 126 constitute an ApaG domain; that stretch reads NQRLSPIKVE…FSLAVPGLLH (125 aa).

The chain is Protein ApaG from Shewanella piezotolerans (strain WP3 / JCM 13877).